The chain runs to 465 residues: Sensor histidine kinase ZraS (465 aa).

The Cytoplasmic portion of the chain corresponds to 1 to 14 (MSFIRLHKDAAATW). A helical membrane pass occupies residues 15–35 (LSRLLPAAIFILVGLFSIMVI). At 36–202 (RDYGRESAAA…AATQAREWRN (167 aa)) the chain is on the periplasmic side. The helical transmembrane segment at 203-223 (TLIVLSALAAVLLATLLAFFW) threads the bilayer. The Cytoplasmic portion of the chain corresponds to 224 to 465 (HQRYQRSHRE…WLPVIARQQD (242 aa)). Residues 253-461 (GVAHEIRNPL…VFTIWLPVIA (209 aa)) enclose the Histidine kinase domain. Position 256 is a phosphohistidine; by autocatalysis (His256).

Autophosphorylated.

The protein localises to the cell inner membrane. It carries out the reaction ATP + protein L-histidine = ADP + protein N-phospho-L-histidine.. Its activity is regulated as follows. Activity of the ZraS/ZraR two-component system is repressed by the zinc-bound form of ZraP, which probably interacts with the periplasmic region of ZraS. Part of the Zra signaling pathway, an envelope stress response (ESR) system composed of the periplasmic accessory protein ZraP, the histidine kinase ZraS and the transcriptional regulator ZraR. The ZraPSR system contributes to antibiotic resistance and is important for membrane integrity in the presence of membrane-targeting biocides. ZraS is a member of the two-component regulatory system ZraS/ZraR. Functions as a membrane-associated sensor kinase that phosphorylates ZraR in response to high concentrations of Zn(2+) or Pb(2+) in the medium. The chain is Sensor histidine kinase ZraS from Salmonella typhimurium (strain LT2 / SGSC1412 / ATCC 700720).